The sequence spans 282 residues: MNSSSSTMNEEPDALSVVNQLRDLAADPLNRRAIVQDQGCLPGLILFMDHPNPPVVHSALLALRYLAECRANREKMKGELGMMLSLQNVIQKTTTPGETKLLASEIYDILQSSNLADGDSFNEMNSRRRKAQFFLGTTNKRAKTVVLHIDGLDDTSRRNLCEEALLKIKGVISFTFQMAVQRCVVRIRSDLKAEALASAIASTKVMKAQQVVKSESGEEMLVPFQDAPVEVEENTELPDYLPEDESPTKEQDKAVSRVGSHPEGGASWLSTAANFLSRSFYW.

Met1 is modified (N-acetylmethionine). The stretch at 39 to 81 (GCLPGLILFMDHPNPPVVHSALLALRYLAECRANREKMKGELG) is one ARM repeat. At Thr137 the chain carries Phosphothreonine. A phosphoserine mark is found at Ser189, Ser246, Ser260, and Ser267. The interval 239–261 (DYLPEDESPTKEQDKAVSRVGSH) is disordered. Residues 246 to 255 (SPTKEQDKAV) are compositionally biased toward basic and acidic residues.

In terms of assembly, interacts with mitochondrial contact site and cristae organizing system (MICOS) complex components IMMT/MIC60 and MICOS10/MIC10. Interacts with mitochondrial outer membrane sorting assembly machinery (SAM) complex components SAMM50 and MTX1.

Its subcellular location is the cytoplasm. The protein localises to the mitochondrion. It localises to the mitochondrion outer membrane. In terms of biological role, in association with mitochondrial contact site and cristae organizing system (MICOS) complex components and mitochondrial outer membrane sorting assembly machinery (SAM) complex components may regulate mitochondrial dynamics playing a role in determining mitochondrial length, distribution and motility. The polypeptide is Armadillo repeat-containing protein 1 (Armc1) (Mus musculus (Mouse)).